The sequence spans 258 residues: UPF0246 protein YaaA (258 aa).

Belongs to the UPF0246 family.

The polypeptide is UPF0246 protein YaaA (Escherichia coli O157:H7 (strain EC4115 / EHEC)).